Consider the following 1136-residue polypeptide: Mitochondrial 3' processome subunit 3 (1136 aa).

A mitochondrion-targeting transit peptide spans methionine 1 to aspartate 97.

In terms of assembly, component of the mitochondrial 3' processome (MPsome) complex composed at least of terminal uridylyltransferase KRET1/TUT1, 3'-5' exonuclease DSS1, MPSS1, MPSS2 and MPSS3. Within the complex, interacts with KRET1.

Its subcellular location is the mitochondrion. Its function is as follows. As part of the mitochondrial 3' processome (MPsome), involved in the maturation of guided RNA (gRNA) precursors. The polypeptide is Mitochondrial 3' processome subunit 3 (Trypanosoma brucei brucei).